Reading from the N-terminus, the 299-residue chain is GTPase Era (299 aa).

One can recognise an Era-type G domain in the interval 9-177 (RSGSVAVIGR…VGDLLKLVPE (169 aa)). Positions 17-24 (GRPNVGKS) are G1. 17–24 (GRPNVGKS) contributes to the GTP binding site. Residues 43–47 (QTTRH) are G2. The tract at residues 64 to 67 (DTPG) is G3. GTP contacts are provided by residues 64 to 68 (DTPGL) and 126 to 129 (NKVD). The interval 126–129 (NKVD) is G4. The tract at residues 156 to 158 (VSA) is G5. The KH type-2 domain occupies 200-284 (VREQLMRQLG…FLETWVRVRE (85 aa)).

This sequence belongs to the TRAFAC class TrmE-Era-EngA-EngB-Septin-like GTPase superfamily. Era GTPase family. In terms of assembly, monomer.

It localises to the cytoplasm. The protein localises to the cell inner membrane. Its function is as follows. An essential GTPase that binds both GDP and GTP, with rapid nucleotide exchange. Plays a role in 16S rRNA processing and 30S ribosomal subunit biogenesis and possibly also in cell cycle regulation and energy metabolism. The polypeptide is GTPase Era (Xanthomonas oryzae pv. oryzae (strain MAFF 311018)).